A 318-amino-acid polypeptide reads, in one-letter code: Aspartate carbamoyltransferase catalytic subunit (318 aa).

The carbamoyl phosphate site is built by Arg-59 and Thr-60. Lys-87 is an L-aspartate binding site. Residues Arg-109, His-137, and Gln-140 each coordinate carbamoyl phosphate. Residues Arg-170 and Arg-224 each coordinate L-aspartate. Residues Gly-265 and Pro-266 each coordinate carbamoyl phosphate.

It belongs to the aspartate/ornithine carbamoyltransferase superfamily. ATCase family. In terms of assembly, heterododecamer (2C3:3R2) of six catalytic PyrB chains organized as two trimers (C3), and six regulatory PyrI chains organized as three dimers (R2).

It carries out the reaction carbamoyl phosphate + L-aspartate = N-carbamoyl-L-aspartate + phosphate + H(+). It participates in pyrimidine metabolism; UMP biosynthesis via de novo pathway; (S)-dihydroorotate from bicarbonate: step 2/3. In terms of biological role, catalyzes the condensation of carbamoyl phosphate and aspartate to form carbamoyl aspartate and inorganic phosphate, the committed step in the de novo pyrimidine nucleotide biosynthesis pathway. This chain is Aspartate carbamoyltransferase catalytic subunit, found in Allorhizobium ampelinum (strain ATCC BAA-846 / DSM 112012 / S4) (Agrobacterium vitis (strain S4)).